A 561-amino-acid chain; its full sequence is Melanopsin-A (561 aa).

Residues 1–34 lie on the Extracellular side of the membrane; the sequence is MRPSTDTMEADTAATHRNFITKVDVPDHAHYTVA. Residues 35 to 55 traverse the membrane as a helical segment; it reads FFVSVIGTLGVTGNALVQFAF. Over 56–68 the chain is Cytoplasmic; the sequence is YSNKKLRNLPNYF. Residues 69–89 form a helical membrane-spanning segment; the sequence is IMNQAASDFLMAFTQSPFFFI. Topologically, residues 90–104 are extracellular; it reads NCLNREWIFGELGCK. A disulfide bridge links Cys103 with Cys181. The chain crosses the membrane as a helical span at residues 105-125; that stretch reads LYAFLGALFGITSMINLLAIS. Residues 126–148 lie on the Cytoplasmic side of the membrane; that stretch reads LDRYMVITRPLEAMKWNSKRRTT. A helical membrane pass occupies residues 149 to 169; it reads IAILLVWLYSLAWSLAPLVGW. Residues 170–201 are Extracellular-facing; sequence SSYIPEGLRTSCTWDYVTYTASNRSYTMMLCC. N-linked (GlcNAc...) asparagine glycosylation occurs at Asn192. Residues 202-222 form a helical membrane-spanning segment; sequence FVFFIPLAIISYCYLFMFLAI. At 223 to 255 the chain is on the cytoplasmic side; the sequence is RKTSRDVERLGIQVRKSTIIRQKSIRTEWKLAK. The helical transmembrane segment at 256-276 threads the bilayer; that stretch reads IAFVVIVVYVLSWSPYACVTM. Topologically, residues 277 to 291 are extracellular; it reads ISWSGHANILSPYSK. The chain crosses the membrane as a helical span at residues 292–312; sequence TVPAVIAKASTIYNPFIYAII. The residue at position 299 (Lys299) is an N6-(retinylidene)lysine. Topologically, residues 313–561 are cytoplasmic; it reads HQKYRKTLAD…EDSLEDNDVV (249 aa). Disordered stretches follow at residues 359-385, 404-448, 479-503, and 539-561; these read AIRR…SYSS, ASFR…SATH, NGLS…SKSA, and SFTD…NDVV. Positions 371-385 are enriched in low complexity; it reads ASASKTAAGASSYSS. The segment covering 550–561 has biased composition (acidic residues); the sequence is VDEDSLEDNDVV.

The protein belongs to the G-protein coupled receptor 1 family. Opsin subfamily. Expressed in retina and brain. Expressed in a subset of retinal horizontal cells as well as a small number of amacrine and retinal ganglion cells. Also expressed in a small population of neurons in the suprachiasmatic nucleus (SNC).

The protein resides in the cell membrane. In terms of biological role, photoreceptor implicated in non-image-forming responses to light. The protein is Melanopsin-A (opn4a) of Gadus morhua (Atlantic cod).